Reading from the N-terminus, the 258-residue chain is Thiazole synthase (258 aa).

The active-site Schiff-base intermediate with DXP is the Lys-98. 1-deoxy-D-xylulose 5-phosphate contacts are provided by residues Gly-159, 185–186 (AG), and 207–208 (NT).

Belongs to the ThiG family. As to quaternary structure, homotetramer. Forms heterodimers with either ThiH or ThiS.

The protein resides in the cytoplasm. It carries out the reaction [ThiS sulfur-carrier protein]-C-terminal-Gly-aminoethanethioate + 2-iminoacetate + 1-deoxy-D-xylulose 5-phosphate = [ThiS sulfur-carrier protein]-C-terminal Gly-Gly + 2-[(2R,5Z)-2-carboxy-4-methylthiazol-5(2H)-ylidene]ethyl phosphate + 2 H2O + H(+). It participates in cofactor biosynthesis; thiamine diphosphate biosynthesis. Catalyzes the rearrangement of 1-deoxy-D-xylulose 5-phosphate (DXP) to produce the thiazole phosphate moiety of thiamine. Sulfur is provided by the thiocarboxylate moiety of the carrier protein ThiS. In vitro, sulfur can be provided by H(2)S. The protein is Thiazole synthase of Bacillus cereus (strain ZK / E33L).